The chain runs to 115 residues: U3-lycotoxin-Ls1a (115 aa).

Residues 1–20 (MKFVLLFGVLLVTLFSYSSA) form the signal peptide. A propeptide spanning residues 21 to 44 (EMLDDFDQADEDELLSSIEKEEAR) is cleaved from the precursor. 4 disulfide bridges follow: Cys-48-Cys-63, Cys-55-Cys-72, Cys-62-Cys-87, and Cys-74-Cys-85.

The protein belongs to the neurotoxin 19 (CSTX) family. 01 subfamily. In terms of tissue distribution, expressed by the venom gland.

It is found in the secreted. The protein is U3-lycotoxin-Ls1a of Lycosa singoriensis (Wolf spider).